A 111-amino-acid polypeptide reads, in one-letter code: Large ribosomal subunit protein uL24 (111 aa).

Positions 43 to 62 are disordered; the sequence is TRHKKKDQTTKRAAKQSTGK.

This sequence belongs to the universal ribosomal protein uL24 family. In terms of assembly, part of the 50S ribosomal subunit.

Functionally, one of two assembly initiator proteins, it binds directly to the 5'-end of the 23S rRNA, where it nucleates assembly of the 50S subunit. In terms of biological role, one of the proteins that surrounds the polypeptide exit tunnel on the outside of the subunit. The sequence is that of Large ribosomal subunit protein uL24 from Mycoplasma pneumoniae (strain ATCC 29342 / M129 / Subtype 1) (Mycoplasmoides pneumoniae).